A 412-amino-acid chain; its full sequence is DnaJ homolog subfamily A member 2 (412 aa).

The region spanning 8-70 is the J domain; that stretch reads KLYDILGVPP…EKRELYDRYG (63 aa). Lys-39 carries the N6-acetyllysine modification. Residues Ser-78 and Ser-123 each carry the phosphoserine modification. The segment at 130–214 adopts a CR-type zinc-finger fold; sequence GKTTKLQLSK…CEGKKVIKEV (85 aa). Lys-134 participates in a covalent cross-link: Glycyl lysine isopeptide (Lys-Gly) (interchain with G-Cter in SUMO2). Positions 143 and 146 each coordinate Zn(2+). The CXXCXGXG motif repeat unit spans residues 143–150; it reads CSACSGQG. N6-acetyllysine is present on Lys-152. Cys-159, Cys-162, Cys-186, Cys-189, Cys-202, and Cys-205 together coordinate Zn(2+). 3 CXXCXGXG motif repeats span residues 159-166, 186-193, and 202-209; these read CSACRGRG, CSDCNGEG, and CKKCEGKK. The segment at 359–412 is disordered; it reads PEVPNIIGDTEEVELQEFDSTRGSGGGQRREAYNDSSDEESSSHHGPGVQCAHQ. At Tyr-391 the chain carries Phosphotyrosine. 2 positions are modified to phosphoserine: Ser-394 and Ser-395. Cys-409 carries the cysteine methyl ester modification. Residue Cys-409 is the site of S-farnesyl cysteine attachment. Positions 410–412 are cleaved as a propeptide — removed in mature form; the sequence is AHQ.

It is found in the membrane. In terms of biological role, co-chaperone of Hsc70. Stimulates ATP hydrolysis and the folding of unfolded proteins mediated by HSPA1A/B (in vitro). This Bos taurus (Bovine) protein is DnaJ homolog subfamily A member 2 (DNAJA2).